The chain runs to 457 residues: Antizyme inhibitor 2 (457 aa).

Positions 115-138 are necessary for polyamine uptake stimulation; sequence QVAQIKYAAKHGVRLLSFDNEVEL.

It belongs to the Orn/Lys/Arg decarboxylase class-II family. ODC antizyme inhibitor subfamily. As to quaternary structure, monomer. Interacts with OAZ1, OAZ2 and OAZ3; this interaction disrupts the interaction between the antizyme and ODC1. Does not form a heterodimer with ODC1. Post-translationally, ubiquitinated, leading to its proteasomal degradation; a process that is reduced in presence of antizymes. May also be degraded through the lysosomal degradative pathway in a proteasomal-independent manner.

The protein localises to the nucleus. The protein resides in the cytoplasm. Its subcellular location is the perinuclear region. It localises to the membrane. It is found in the cytoplasmic vesicle. The protein localises to the endoplasmic reticulum-Golgi intermediate compartment. The protein resides in the golgi apparatus. Its subcellular location is the cis-Golgi network. It localises to the trans-Golgi network. It is found in the cytoplasmic granule. The protein localises to the cell projection. The protein resides in the axon. Its subcellular location is the dendrite. It localises to the perikaryon. Functionally, antizyme inhibitor (AZI) protein that positively regulates ornithine decarboxylase (ODC) activity and polyamine uptake. AZI is an enzymatically inactive ODC homolog that counteracts the negative effect of ODC antizymes (AZs) OAZ1, OAZ2 and OAZ3 on ODC activity by competing with ODC for antizyme-binding. Inhibits antizyme-dependent ODC degradation and releases ODC monomers from their inactive complex with antizymes, leading to formation of the catalytically active ODC homodimer and restoring polyamine production. Participates in the morphological integrity of the trans-Golgi network (TGN) and functions as a regulator of intracellular secretory vesicle trafficking. The chain is Antizyme inhibitor 2 (Azin2) from Rattus norvegicus (Rat).